Here is a 204-residue protein sequence, read N- to C-terminus: Holliday junction branch migration complex subunit RuvA (204 aa).

The segment at 1–64 (MIGKLKGTID…EDQLKLFGFM (64 aa)) is domain I. Residues 65-143 (TALEREWFNL…AFAGEAINIA (79 aa)) are domain II. Positions 144 to 151 (LKQELGEG) are flexible linker. The interval 152–204 (VAAAPVADAVSALTNLGYSRDQAANAVAAAMKTAGDDADSAKLIRLGLKELAR) is domain III.

This sequence belongs to the RuvA family. Homotetramer. Forms an RuvA(8)-RuvB(12)-Holliday junction (HJ) complex. HJ DNA is sandwiched between 2 RuvA tetramers; dsDNA enters through RuvA and exits via RuvB. An RuvB hexamer assembles on each DNA strand where it exits the tetramer. Each RuvB hexamer is contacted by two RuvA subunits (via domain III) on 2 adjacent RuvB subunits; this complex drives branch migration. In the full resolvosome a probable DNA-RuvA(4)-RuvB(12)-RuvC(2) complex forms which resolves the HJ.

It is found in the cytoplasm. Its function is as follows. The RuvA-RuvB-RuvC complex processes Holliday junction (HJ) DNA during genetic recombination and DNA repair, while the RuvA-RuvB complex plays an important role in the rescue of blocked DNA replication forks via replication fork reversal (RFR). RuvA specifically binds to HJ cruciform DNA, conferring on it an open structure. The RuvB hexamer acts as an ATP-dependent pump, pulling dsDNA into and through the RuvAB complex. HJ branch migration allows RuvC to scan DNA until it finds its consensus sequence, where it cleaves and resolves the cruciform DNA. In Rhizobium leguminosarum bv. trifolii (strain WSM2304), this protein is Holliday junction branch migration complex subunit RuvA.